We begin with the raw amino-acid sequence, 504 residues long: Maturase K (504 aa).

Belongs to the intron maturase 2 family. MatK subfamily.

It is found in the plastid. It localises to the chloroplast. In terms of biological role, usually encoded in the trnK tRNA gene intron. Probably assists in splicing its own and other chloroplast group II introns. The polypeptide is Maturase K (Turritis glabra (Tower mustard)).